The chain runs to 255 residues: Fasciclin-like arabinogalactan protein 14 (255 aa).

The signal sequence occupies residues 1–23 (MSSSLTIFFFFFASTFLYTSSNS). The region spanning 24 to 169 (FNITNILNEH…ISVLHISSAI (146 aa)) is the FAS1 domain. N-linked (GlcNAc...) asparagine glycans are attached at residues Asn25, Asn99, Asn125, and Asn159. The disordered stretch occupies residues 179–231 (PTASPLSPVSSPPRPAESPNDDGQDFDEPPSSAPGAAADEPSENAGSANGVSR). Over residues 197-206 (PNDDGQDFDE) the composition is skewed to acidic residues. A compositionally biased stretch (polar residues) spans 222–231 (NAGSANGVSR). Ser225 carries the GPI-anchor amidated serine lipid modification. Residues 226 to 255 (ANGVSRNDSQPAFAFTLLMSFIWWFMARLR) constitute a propeptide, removed in mature form.

The protein belongs to the fasciclin-like AGP family.

It localises to the cell membrane. In terms of biological role, may be a cell surface adhesion protein. This chain is Fasciclin-like arabinogalactan protein 14 (FLA14), found in Arabidopsis thaliana (Mouse-ear cress).